We begin with the raw amino-acid sequence, 509 residues long: Zinc finger CCCH-type with G patch domain-containing protein (509 aa).

The C3H1-type zinc-finger motif lies at 155–178 (PCNYYLEGECRFDEIRCRYSHGAL). Residues 254-277 (EDELTSEDSSSSPHDESSDEIDSD) form a disordered region. In terms of domain architecture, G-patch spans 310-356 (TRGIGSKLMEKMGYIHGTGLGSEGRGIVTPVSAQILPQGRSLDACME). The disordered stretch occupies residues 407 to 430 (LGGGESRHQGDQAAKKAKTNDLQQ). The span at 411 to 420 (ESRHQGDQAA) shows a compositional bias: basic and acidic residues.

Its subcellular location is the nucleus. In terms of biological role, transcription repressor. The sequence is that of Zinc finger CCCH-type with G patch domain-containing protein from Drosophila pseudoobscura pseudoobscura (Fruit fly).